We begin with the raw amino-acid sequence, 535 residues long: Atrial natriuretic peptide receptor 3 (535 aa).

The signal sequence occupies residues 1 to 26; that stretch reads MRSLLLFTFSACVLLARALLAGGASS. Residues 27-40 constitute a propeptide that is removed on maturation; that stretch reads GGGDTGPGNRRRER. The Extracellular portion of the chain corresponds to 41–477; that stretch reads EALAAQKIEV…CKSCGLEESA (437 aa). N81 carries N-linked (GlcNAc...) asparagine glycosylation. Cystine bridges form between C103–C131 and C208–C256. N-linked (GlcNAc...) asparagine glycans are attached at residues N288 and N389. A helical transmembrane segment spans residues 478-498; that stretch reads VTGIVVGALLGAGLLMAFYFF. At 499-535 the chain is on the cytoplasmic side; the sequence is RKKYRITIERRNHQEESNIGKHRELREDSIRSHFSVA.

The protein belongs to the ANF receptor family. As to quaternary structure, homodimer; disulfide-linked. Interacts with OSTN.

It localises to the cell membrane. In terms of biological role, receptor for the natriuretic peptide hormones, binding with similar affinities atrial natriuretic peptide NPPA/ANP, brain natriuretic peptide NPPB/BNP, and C-type natriuretic peptide NPPC/CNP. May function as a clearance receptor for NPPA, NPPB and NPPC, regulating their local concentrations and effects. Acts as a regulator of osteoblast differentiation and bone growth by binding to its ligand osteocrin, thereby preventing binding between NPR3/NPR-C and natriuretic peptides, leading to increase cGMP production. The polypeptide is Atrial natriuretic peptide receptor 3 (Npr3) (Rattus norvegicus (Rat)).